The primary structure comprises 275 residues: NH(3)-dependent NAD(+) synthetase (275 aa).

Residue 47-54 (GISGGQDS) coordinates ATP. Mg(2+) is bound at residue D53. Residue R141 coordinates deamido-NAD(+). Residue T161 participates in ATP binding. E166 is a Mg(2+) binding site. Deamido-NAD(+) is bound by residues K174 and D181. ATP contacts are provided by K190 and T212. Residue 261–262 (HK) coordinates deamido-NAD(+).

The protein belongs to the NAD synthetase family. Homodimer.

The enzyme catalyses deamido-NAD(+) + NH4(+) + ATP = AMP + diphosphate + NAD(+) + H(+). It functions in the pathway cofactor biosynthesis; NAD(+) biosynthesis; NAD(+) from deamido-NAD(+) (ammonia route): step 1/1. Its function is as follows. Catalyzes the ATP-dependent amidation of deamido-NAD to form NAD. Uses ammonia as a nitrogen source. This is NH(3)-dependent NAD(+) synthetase from Enterococcus faecalis (strain ATCC 700802 / V583).